A 201-amino-acid chain; its full sequence is Recombination protein RecR (201 aa).

A C4-type zinc finger spans residues 57–72; that stretch reads CADCRTFTEQDVCNIC. Residues 81-176 enclose the Toprim domain; sequence GQICVVESPA…EASRIAHGVP (96 aa).

Belongs to the RecR family.

Its function is as follows. May play a role in DNA repair. It seems to be involved in an RecBC-independent recombinational process of DNA repair. It may act with RecF and RecO. The protein is Recombination protein RecR of Salmonella agona (strain SL483).